The chain runs to 145 residues: Protein SprT-like (145 aa).

The SprT-like domain occupies 5-141 (DYVREVSLAD…CGRCHGRLIK (137 aa)). His-64 is a binding site for Zn(2+). Glu-65 is an active-site residue. Zn(2+) is bound at residue His-68.

This sequence belongs to the SprT family. Zn(2+) serves as cofactor.

The protein localises to the cytoplasm. This chain is Protein SprT-like, found in Streptococcus equi subsp. zooepidemicus (strain H70).